Reading from the N-terminus, the 586-residue chain is NudC domain-containing protein 1 (586 aa).

Positions 259-278 (KDQPESSEDEKMDEDNKREP) are disordered. In terms of domain architecture, CS spans 275-364 (KREPLYNWHQ…EPGSTWAELV (90 aa)).

It localises to the cytoplasm. It is found in the nucleus. This chain is NudC domain-containing protein 1, found in Xenopus tropicalis (Western clawed frog).